The primary structure comprises 156 residues: Small ribosomal subunit protein uS7 (156 aa).

Belongs to the universal ribosomal protein uS7 family. As to quaternary structure, part of the 30S ribosomal subunit. Contacts proteins S9 and S11.

Its function is as follows. One of the primary rRNA binding proteins, it binds directly to 16S rRNA where it nucleates assembly of the head domain of the 30S subunit. Is located at the subunit interface close to the decoding center, probably blocks exit of the E-site tRNA. The chain is Small ribosomal subunit protein uS7 from Heliobacterium modesticaldum (strain ATCC 51547 / Ice1).